We begin with the raw amino-acid sequence, 162 residues long: Ubiquitin-fold modifier-conjugating enzyme 1 (162 aa).

Residue cysteine 115 is the Glycyl thioester intermediate of the active site.

This sequence belongs to the ubiquitin-conjugating enzyme family. UFC1 subfamily. Interacts with uba-5.

Its function is as follows. E2-like enzyme which forms an intermediate with ufm-1. The intermediate is formed via a thioester linkage. The protein is Ubiquitin-fold modifier-conjugating enzyme 1 of Caenorhabditis briggsae.